The following is a 157-amino-acid chain: Sorting nexin-3 (157 aa).

The tract at residues 1 to 21 (MSKPFQPISDVINTSPKNKSQ) is disordered. Polar residues predominate over residues 11–21 (VINTSPKNKSQ). The 121-residue stretch at 32–152 (NFLEIEVKNP…EFIQNEKWDP (121 aa)) folds into the PX domain. R75, S77, K101, and R117 together coordinate a 1,2-diacyl-sn-glycero-3-phospho-(1D-myo-inositol-3-phosphate).

Belongs to the sorting nexin family.

Its subcellular location is the cytoplasm. The protein resides in the golgi apparatus membrane. The protein localises to the prevacuolar compartment membrane. In terms of biological role, required for retention of late Golgi membrane proteins. Component of the retrieval machinery that functions by direct interaction with the cytosolic tails of certain TGN membrane proteins during the sorting/budding process at the prevacuolar compartment. Binds phosphatidylinositol 3-phosphate (PtdIns(P3)). In Candida albicans (strain SC5314 / ATCC MYA-2876) (Yeast), this protein is Sorting nexin-3 (SNX3).